The following is a 764-amino-acid chain: 1,4-alpha-glucan branching enzyme GlgB (764 aa).

Asp431 functions as the Nucleophile in the catalytic mechanism. Glu484 functions as the Proton donor in the catalytic mechanism.

It belongs to the glycosyl hydrolase 13 family. GlgB subfamily. As to quaternary structure, monomer.

The enzyme catalyses Transfers a segment of a (1-&gt;4)-alpha-D-glucan chain to a primary hydroxy group in a similar glucan chain.. The protein operates within glycan biosynthesis; glycogen biosynthesis. Its function is as follows. Catalyzes the formation of the alpha-1,6-glucosidic linkages in glycogen by scission of a 1,4-alpha-linked oligosaccharide from growing alpha-1,4-glucan chains and the subsequent attachment of the oligosaccharide to the alpha-1,6 position. This Synechococcus sp. (strain CC9902) protein is 1,4-alpha-glucan branching enzyme GlgB.